The chain runs to 351 residues: Delta(7)-sterol 5(6)-desaturase (351 aa).

3 helical membrane passes run 88 to 108, 136 to 156, and 173 to 193; these read LSLF…VASF, GLGA…LELH, and VRLA…IYLL. A Fatty acid hydroxylase domain is found at 180-305; the sequence is LFFILFTDFG…FTTLWDRLGG (126 aa). Positions 194 to 198 match the Histidine box-1 motif; sequence HRWLH. The short motif at 207-211 is the Histidine box-2 element; it reads HKKHH. A helical membrane pass occupies residues 237-257; it reads HLFPMLFPLHKVSYLVLFTFV. A Histidine box-3 motif is present at residues 282 to 286; that stretch reads HTVHH.

It belongs to the sterol desaturase family. The cofactor is Fe cation.

Its subcellular location is the endoplasmic reticulum membrane. It carries out the reaction a Delta(7)-sterol + 2 Fe(II)-[cytochrome b5] + O2 + 2 H(+) = a Delta(5),Delta(7)-sterol + 2 Fe(III)-[cytochrome b5] + 2 H2O. It participates in steroid metabolism; ergosterol biosynthesis; ergosterol from zymosterol: step 3/5. Its function is as follows. Catalyzes the introduction of a C-5 double bond in the B ring of ergosterol. May contribute to the regulation of ergosterol biosynthesis. The sequence is that of Delta(7)-sterol 5(6)-desaturase (ERG3) from Eremothecium gossypii (strain ATCC 10895 / CBS 109.51 / FGSC 9923 / NRRL Y-1056) (Yeast).